The chain runs to 501 residues: Cilia- and flagella-associated protein 45 (501 aa).

The stretch at 75–114 (MTAEDVAAAKREAEAKREQLQAVSKARKEKMLKLEEEAKK) forms a coiled coil.

The protein belongs to the CFAP45 family.

It localises to the cell projection. Its subcellular location is the cilium. The protein resides in the flagellum. This chain is Cilia- and flagella-associated protein 45, found in Chlamydomonas reinhardtii (Chlamydomonas smithii).